The primary structure comprises 88 residues: Small ribosomal subunit protein uS15 (88 aa).

This sequence belongs to the universal ribosomal protein uS15 family. In terms of assembly, part of the 30S ribosomal subunit. Forms a bridge to the 50S subunit in the 70S ribosome, contacting the 23S rRNA.

One of the primary rRNA binding proteins, it binds directly to 16S rRNA where it helps nucleate assembly of the platform of the 30S subunit by binding and bridging several RNA helices of the 16S rRNA. Its function is as follows. Forms an intersubunit bridge (bridge B4) with the 23S rRNA of the 50S subunit in the ribosome. This is Small ribosomal subunit protein uS15 from Mycoplasma mycoides subsp. mycoides SC (strain CCUG 32753 / NCTC 10114 / PG1).